The chain runs to 414 residues: Putative L-lactate dehydrogenase (414 aa).

The FMN hydroxy acid dehydrogenase domain occupies 29–406 (RRLGAALTIQ…SPRHVTQLRR (378 aa)). Y55 is a binding site for a 2-oxocarboxylate. FMN is bound by residues S137 and Q159. Y161 is a binding site for a 2-oxocarboxylate. FMN is bound at residue T187. Position 196 (R196) interacts with a 2-oxocarboxylate. An FMN-binding site is contributed by K277. The Proton acceptor role is filled by H301. R304 lines the a 2-oxocarboxylate pocket. Residues 332-336 (DTGIM) and 355-356 (GR) contribute to the FMN site.

The protein belongs to the FMN-dependent alpha-hydroxy acid dehydrogenase family. FMN is required as a cofactor.

It catalyses the reaction (S)-lactate + A = pyruvate + AH2. The sequence is that of Putative L-lactate dehydrogenase (lldD) from Mycobacterium tuberculosis (strain ATCC 25618 / H37Rv).